A 534-amino-acid polypeptide reads, in one-letter code: Arginine--tRNA ligase (534 aa).

Positions 120–130 match the 'HIGH' region motif; the sequence is ANPTGFLHLGH.

The protein belongs to the class-I aminoacyl-tRNA synthetase family. Monomer.

It localises to the cytoplasm. It catalyses the reaction tRNA(Arg) + L-arginine + ATP = L-arginyl-tRNA(Arg) + AMP + diphosphate. The chain is Arginine--tRNA ligase from Mesomycoplasma hyopneumoniae (strain 232) (Mycoplasma hyopneumoniae).